Consider the following 101-residue polypeptide: Small ribosomal subunit protein uS14 (101 aa).

It belongs to the universal ribosomal protein uS14 family. Part of the 30S ribosomal subunit. Contacts proteins S3 and S10.

Binds 16S rRNA, required for the assembly of 30S particles and may also be responsible for determining the conformation of the 16S rRNA at the A site. The protein is Small ribosomal subunit protein uS14 of Hydrogenovibrio crunogenus (strain DSM 25203 / XCL-2) (Thiomicrospira crunogena).